The following is a 453-amino-acid chain: Ribulose bisphosphate carboxylase large chain (453 aa).

Positions 1 to 2 (MS) are excised as a propeptide. The residue at position 3 (proline 3) is an N-acetylproline. Lysine 14 bears the N6,N6,N6-trimethyllysine mark. Substrate is bound by residues asparagine 123 and threonine 173. Residue lysine 175 is the Proton acceptor of the active site. Substrate is bound at residue lysine 177. Mg(2+) contacts are provided by lysine 201, aspartate 203, and glutamate 204. Lysine 201 is modified (N6-carboxylysine). Catalysis depends on histidine 294, which acts as the Proton acceptor. Residues arginine 295, histidine 327, and serine 379 each contribute to the substrate site.

This sequence belongs to the RuBisCO large chain family. Type I subfamily. Heterohexadecamer of 8 large chains and 8 small chains; disulfide-linked. The disulfide link is formed within the large subunit homodimers. Mg(2+) is required as a cofactor. The disulfide bond which can form in the large chain dimeric partners within the hexadecamer appears to be associated with oxidative stress and protein turnover.

It localises to the plastid. The protein resides in the chloroplast. It catalyses the reaction 2 (2R)-3-phosphoglycerate + 2 H(+) = D-ribulose 1,5-bisphosphate + CO2 + H2O. The enzyme catalyses D-ribulose 1,5-bisphosphate + O2 = 2-phosphoglycolate + (2R)-3-phosphoglycerate + 2 H(+). RuBisCO catalyzes two reactions: the carboxylation of D-ribulose 1,5-bisphosphate, the primary event in carbon dioxide fixation, as well as the oxidative fragmentation of the pentose substrate in the photorespiration process. Both reactions occur simultaneously and in competition at the same active site. This is Ribulose bisphosphate carboxylase large chain from Galium album (White bedstraw).